The chain runs to 229 residues: Growth factor receptor-bound protein 2-A (229 aa).

One can recognise an SH3 1 domain in the interval Met-1–His-58. The 93-residue stretch at Trp-60 to Glu-152 folds into the SH2 domain. Residues Gln-168 to Arg-227 enclose the SH3 2 domain.

The protein belongs to the GRB2/sem-5/DRK family.

Its subcellular location is the nucleus. It is found in the cytoplasm. It localises to the endosome. The protein localises to the golgi apparatus. Functionally, adapter protein that provides a critical link between cell surface growth factor receptors and the Ras signaling pathway. Promotes meiotic reinitiation during oocyte maturation. In Xenopus laevis (African clawed frog), this protein is Growth factor receptor-bound protein 2-A (grb2-a).